A 134-amino-acid chain; its full sequence is Large ribosomal subunit protein uL16c (134 aa).

Over residues methionine 1 to methionine 17 the composition is skewed to basic residues. The interval methionine 1–serine 22 is disordered.

The protein belongs to the universal ribosomal protein uL16 family. Part of the 50S ribosomal subunit.

The protein resides in the plastid. The protein localises to the chloroplast. In Solanum tuberosum (Potato), this protein is Large ribosomal subunit protein uL16c.